The chain runs to 25 residues: Endoglucanase 1 (25 aa).

The tract at residues 1 to 25 is disordered; it reads YDASLKPNLQIPQKNIPNNDAVNIK. Positions 10–25 are enriched in polar residues; that stretch reads QIPQKNIPNNDAVNIK.

It carries out the reaction Endohydrolysis of (1-&gt;4)-beta-D-glucosidic linkages in cellulose, lichenin and cereal beta-D-glucans.. Functionally, this enzyme hydrolyzes cellotetraose, cellopentaose, and cellohexaose to cellobiose and cellotriose but does not hydrolyze cellobiose or cellotriose. This chain is Endoglucanase 1, found in Ruminiclostridium josui (Clostridium josui).